A 364-amino-acid polypeptide reads, in one-letter code: Acidic fibroblast growth factor intracellular-binding protein (364 aa).

Threonine 2 is subject to N-acetylthreonine.

In terms of assembly, binds to internalized FGF1; this interaction is increased in the presence of CSNKB, suggesting a possible cooperative interaction between CSNKB and FIBP in binding to FGF1. As to expression, highly expressed in heart, skeletal muscle and pancreas. Expressed at lower levels in brain. Also found in placenta, liver and kidney.

The protein resides in the nucleus. It localises to the endomembrane system. In terms of biological role, may be involved in mitogenic function of FGF1. May mediate with IER2 FGF-signaling in the establishment of laterality in the embryo. This chain is Acidic fibroblast growth factor intracellular-binding protein (FIBP), found in Homo sapiens (Human).